A 79-amino-acid chain; its full sequence is Small ribosomal subunit protein bS18 (79 aa).

Belongs to the bacterial ribosomal protein bS18 family. Part of the 30S ribosomal subunit. Forms a tight heterodimer with protein bS6.

In terms of biological role, binds as a heterodimer with protein bS6 to the central domain of the 16S rRNA, where it helps stabilize the platform of the 30S subunit. This is Small ribosomal subunit protein bS18 from Bradyrhizobium diazoefficiens (strain JCM 10833 / BCRC 13528 / IAM 13628 / NBRC 14792 / USDA 110).